Reading from the N-terminus, the 815-residue chain is DNA gyrase subunit B (815 aa).

The segment at 1–21 is disordered; that stretch reads MEKTPATGSAVAPPPVEYGTD. The Toprim domain maps to 430–545; sequence SELYIVEGDS…AISTSRSRRS (116 aa). Mg(2+) contacts are provided by Glu-436, Asp-509, and Asp-511.

Belongs to the type II topoisomerase GyrB family. In terms of assembly, heterotetramer, composed of two GyrA and two GyrB chains. In the heterotetramer, GyrA contains the active site tyrosine that forms a transient covalent intermediate with DNA, while GyrB binds cofactors and catalyzes ATP hydrolysis. Mg(2+) is required as a cofactor. Mn(2+) serves as cofactor. It depends on Ca(2+) as a cofactor.

The protein resides in the cytoplasm. The enzyme catalyses ATP-dependent breakage, passage and rejoining of double-stranded DNA.. A type II topoisomerase that negatively supercoils closed circular double-stranded (ds) DNA in an ATP-dependent manner to modulate DNA topology and maintain chromosomes in an underwound state. Negative supercoiling favors strand separation, and DNA replication, transcription, recombination and repair, all of which involve strand separation. Also able to catalyze the interconversion of other topological isomers of dsDNA rings, including catenanes and knotted rings. Type II topoisomerases break and join 2 DNA strands simultaneously in an ATP-dependent manner. This Myxococcus xanthus protein is DNA gyrase subunit B.